The chain runs to 426 residues: UDP-N-acetylglucosamine--N-acetylmuramyl-(pentapeptide) pyrophosphoryl-undecaprenol N-acetylglucosamine transferase (426 aa).

UDP-N-acetyl-alpha-D-glucosamine contacts are provided by residues 28-30 (TGG), N140, R176, S204, I257, and Q302. Residues 369–388 (AGNGPSGMGNGHSSEQPQER) form a disordered region.

Belongs to the glycosyltransferase 28 family. MurG subfamily.

It localises to the cell inner membrane. It catalyses the reaction di-trans,octa-cis-undecaprenyl diphospho-N-acetyl-alpha-D-muramoyl-L-alanyl-D-glutamyl-meso-2,6-diaminopimeloyl-D-alanyl-D-alanine + UDP-N-acetyl-alpha-D-glucosamine = di-trans,octa-cis-undecaprenyl diphospho-[N-acetyl-alpha-D-glucosaminyl-(1-&gt;4)]-N-acetyl-alpha-D-muramoyl-L-alanyl-D-glutamyl-meso-2,6-diaminopimeloyl-D-alanyl-D-alanine + UDP + H(+). Its pathway is cell wall biogenesis; peptidoglycan biosynthesis. Cell wall formation. Catalyzes the transfer of a GlcNAc subunit on undecaprenyl-pyrophosphoryl-MurNAc-pentapeptide (lipid intermediate I) to form undecaprenyl-pyrophosphoryl-MurNAc-(pentapeptide)GlcNAc (lipid intermediate II). This chain is UDP-N-acetylglucosamine--N-acetylmuramyl-(pentapeptide) pyrophosphoryl-undecaprenol N-acetylglucosamine transferase, found in Xanthomonas axonopodis pv. citri (strain 306).